The sequence spans 129 residues: Small ribosomal subunit protein uS11 (129 aa).

The protein belongs to the universal ribosomal protein uS11 family. Part of the 30S ribosomal subunit. Interacts with proteins S7 and S18. Binds to IF-3.

In terms of biological role, located on the platform of the 30S subunit, it bridges several disparate RNA helices of the 16S rRNA. Forms part of the Shine-Dalgarno cleft in the 70S ribosome. The chain is Small ribosomal subunit protein uS11 from Yersinia enterocolitica serotype O:8 / biotype 1B (strain NCTC 13174 / 8081).